Here is a 167-residue protein sequence, read N- to C-terminus: Biotin carboxyl carrier protein of acetyl-CoA carboxylase (167 aa).

The tract at residues 53 to 91 (SGFSQERPIPTDPKKDTIKETTTENSETSTTTSSGDFIS) is disordered. A compositionally biased stretch (basic and acidic residues) spans 64-74 (DPKKDTIKETT). Over residues 75 to 86 (TENSETSTTTSS) the composition is skewed to low complexity. A Biotinyl-binding domain is found at 87-163 (GDFISSPLVG…QFGSKLFRIA (77 aa)). N6-biotinyllysine is present on K129.

In terms of assembly, homodimer.

It functions in the pathway lipid metabolism; fatty acid biosynthesis. This protein is a component of the acetyl coenzyme A carboxylase complex; first, biotin carboxylase catalyzes the carboxylation of the carrier protein and then the transcarboxylase transfers the carboxyl group to form malonyl-CoA. The chain is Biotin carboxyl carrier protein of acetyl-CoA carboxylase (accB) from Chlamydia pneumoniae (Chlamydophila pneumoniae).